Reading from the N-terminus, the 788-residue chain is Protein HHLF1 (788 aa).

Disordered regions lie at residues 1–82 (MAQR…NFWH), 366–385 (TGTA…ETEA), and 609–663 (IHKK…SRLP). The segment covering 16–25 (RGRGAGGPSG) has biased composition (gly residues). Residues 26–56 (VGSSPPSSCVPMGAPSTAGTGASAAATTTPG) are compositionally biased toward low complexity. An RNA-binding region spans residues 74 to 248 (SGNNSNFWHG…HGAGEVVRLY (175 aa)). The segment covering 650 to 659 (LRRDDEDWKP) has biased composition (basic and acidic residues). Positions 671 to 788 (LDETFWVLGS…IATHYHYNAQ (118 aa)) are interaction with host EIF2AK2/PKR.

Belongs to the herpesviridae US22 family. In terms of assembly, interacts with host EIF2AK2/PKR; this interaction retains EIF2AK2 to the host nucleus and prevents its activation. Interaction (via N-terminus) with host BECN1; this interaction inhibits host autophagy. Interacts with the viral DNA polymerase accessory subunit UL44. Interacts with host HSPA5.

Its subcellular location is the virion. It is found in the host cytoplasm. The protein localises to the host nucleus. In terms of biological role, inhibits the establishment of the antiviral state and the integrated stress response (ISR) in the infected cell. Prevents the phosphorylation of the host eukaryotic translation initiation factor eIF-2alpha/EIF2S1 and thus the shutoff of viral and cellular protein synthesis by directly interacting with EIF2AK2/PKR. Prevents stress granule formation in response to eIF-2alpha/EIF2S1 phosphorylation, thereby rescuing viral replication and protein synthesis. Also inhibits host autophagy by interacting with host Beclin-1/BECN1. The protein is Protein HHLF1 (TRS1) of Homo sapiens (Human).